The following is an 886-amino-acid chain: cytokinesis protein 3 (886 aa).

Residues 6-67 (QLPCMVRALY…PSNFVHCLDI (62 aa)) enclose the SH3 domain. Over residues 72–88 (PGSSMSRTSASSFRYSS) the composition is skewed to low complexity. The segment at 72 to 189 (PGSSMSRTSA…DLSRSTPSPL (118 aa)) is disordered. A compositionally biased stretch (polar residues) spans 89–104 (PQKSSIDTPITSSDQG). The segment covering 135 to 154 (LNSLGSSLSLKKSVSRPPSS) has biased composition (low complexity). Residues 155–188 (MSRTNLDVSSRWDNTADNDSQIDAQDLSRSTPSP) are compositionally biased toward polar residues. Phosphoserine is present on serine 213. 2 disordered regions span residues 219–290 (TKST…SPSD) and 358–393 (RRGS…SPHT). The segment covering 253 to 264 (DNSSKPRTSLQP) has biased composition (polar residues).

This sequence belongs to the CYK3 family.

The protein localises to the cell tip. In terms of biological role, involved in cytokinesis. The polypeptide is cytokinesis protein 3 (cyk3) (Schizosaccharomyces pombe (strain 972 / ATCC 24843) (Fission yeast)).